We begin with the raw amino-acid sequence, 70 residues long: Sec-independent protein translocase protein TatA (70 aa).

A helical membrane pass occupies residues 1–21; sequence MGSFSIWHWLIVLVVVALLFG. Residues 45-70 are disordered; the sequence is KGESEQAEDETAKPLPKERDKDSARG.

This sequence belongs to the TatA/E family. The Tat system comprises two distinct complexes: a TatABC complex, containing multiple copies of TatA, TatB and TatC subunits, and a separate TatA complex, containing only TatA subunits. Substrates initially bind to the TatABC complex, which probably triggers association of the separate TatA complex to form the active translocon.

It is found in the cell inner membrane. Its function is as follows. Part of the twin-arginine translocation (Tat) system that transports large folded proteins containing a characteristic twin-arginine motif in their signal peptide across membranes. TatA could form the protein-conducting channel of the Tat system. This chain is Sec-independent protein translocase protein TatA, found in Phenylobacterium zucineum (strain HLK1).